The chain runs to 545 residues: Zinc finger protein 697 (545 aa).

The segment at 1-143 (MKQEDNQGVC…EQPAPPVLPW (143 aa)) is disordered. K2 participates in a covalent cross-link: Glycyl lysine isopeptide (Lys-Gly) (interchain with G-Cter in SUMO2). Residues 23–36 (DFEDSEDREGDPEE) show a composition bias toward acidic residues. A compositionally biased stretch (basic and acidic residues) spans 45–55 (DTNKREGHPEP). Acidic residues-rich tracts occupy residues 79–94 (LSEEEGVSVRGEEDDQ) and 118–135 (EDDDESAGENRLEEEEEQ). 11 C2H2-type zinc fingers span residues 189–211 (TICPDCGESFSPGAAFLQHQRIH), 261–283 (FRCGECGKGFSRNTYLTNHLRLH), 289–311 (NLCADCGKSFSWRADLLKHRRLH), 317–339 (YPCPECGEAFSLSSHLLSHRRAH), 353–375 (FACGECGKGFVRRSHLANHQRIH), 381–403 (HGCGECGKRFSWRSDLVKHQRVH), 409–431 (YMCSECGETFSVSSHLFTHKRTH), 437–459 (YVCRECGKGFGRNSHLVNHLRVH), 465–487 (FRCGQCEKRFSDFSTLTQHQRTH), 493–515 (YTCIECGKSFIQSSHLIRHRRIH), and 521–543 (HKCAGCGKGFRYKTHLAQHQKLH).

Belongs to the krueppel C2H2-type zinc-finger protein family.

The protein resides in the nucleus. In terms of biological role, RNA-interacting protein with a high number of miRNA targets. Acts as a damage-induced regulator of muscle remodeling by mediating the interferon gamma response in muscle cells. This chain is Zinc finger protein 697, found in Homo sapiens (Human).